A 269-amino-acid polypeptide reads, in one-letter code: GRF-interacting factor 10 (269 aa).

Positions 1–71 (MTAEGEAKNP…GEKDDGACRD (71 aa)) are disordered. Over residues 22–43 (QQAAPAPAPAQGEVAQEAAVQG) the composition is skewed to low complexity. Over residues 47–69 (EQERDKADREVQGGAGEKDDGAC) the composition is skewed to basic and acidic residues. In terms of domain architecture, QLQ spans 113 to 148 (AFTAMQLQELEQQSRVYQYMAARVPVPTHLVFPVWK). Positions 179–223 (EPEPGRCRRTDGKKWRCWRNTIPNEKYCERHMHRGRKRPVQVFLE) constitute a WRC domain. Short sequence motifs (bipartite nuclear localization signal) lie at residues 184-194 (RCRRTDGKKWR) and 212-216 (RGRKR). Residues 217–269 (PVQVFLEDDEPDSASGSKPAAPGKATEGAKKADDKSPSSKKLAVAAPAAVQST) form a disordered region. A compositionally biased stretch (basic and acidic residues) spans 243–253 (EGAKKADDKSP).

The protein belongs to the GRF family. As to quaternary structure, interacts with GIF1. In terms of tissue distribution, highly expressed in shoots. Expressed in developing leaves.

It is found in the nucleus. Involved in the regulation of cell proliferation in developing shoots and leaves. Does not possess transactivation activity. The chain is GRF-interacting factor 10 from Zea mays (Maize).